Reading from the N-terminus, the 297-residue chain is 4-hydroxy-tetrahydrodipicolinate synthase (297 aa).

Thr46 provides a ligand contact to pyruvate. The active-site Proton donor/acceptor is Tyr134. Lys162 (schiff-base intermediate with substrate) is an active-site residue. Ile204 serves as a coordination point for pyruvate.

This sequence belongs to the DapA family. In terms of assembly, homotetramer; dimer of dimers.

The protein resides in the cytoplasm. It catalyses the reaction L-aspartate 4-semialdehyde + pyruvate = (2S,4S)-4-hydroxy-2,3,4,5-tetrahydrodipicolinate + H2O + H(+). Its pathway is amino-acid biosynthesis; L-lysine biosynthesis via DAP pathway; (S)-tetrahydrodipicolinate from L-aspartate: step 3/4. In terms of biological role, catalyzes the condensation of (S)-aspartate-beta-semialdehyde [(S)-ASA] and pyruvate to 4-hydroxy-tetrahydrodipicolinate (HTPA). In Stenotrophomonas maltophilia (strain K279a), this protein is 4-hydroxy-tetrahydrodipicolinate synthase.